Here is a 307-residue protein sequence, read N- to C-terminus: Undecaprenyl-diphosphatase (307 aa).

Helical transmembrane passes span alanine 40–phenylalanine 60, leucine 79–phenylalanine 99, leucine 107–valine 127, alanine 183–phenylalanine 203, isoleucine 219–valine 239, and leucine 249–alanine 269.

This sequence belongs to the UppP family.

The protein localises to the cell inner membrane. It catalyses the reaction di-trans,octa-cis-undecaprenyl diphosphate + H2O = di-trans,octa-cis-undecaprenyl phosphate + phosphate + H(+). Its function is as follows. Catalyzes the dephosphorylation of undecaprenyl diphosphate (UPP). Confers resistance to bacitracin. The sequence is that of Undecaprenyl-diphosphatase from Sorangium cellulosum (strain So ce56) (Polyangium cellulosum (strain So ce56)).